Here is a 378-residue protein sequence, read N- to C-terminus: Ribosomal RNA large subunit methyltransferase G (378 aa).

It belongs to the methyltransferase superfamily. RlmG family.

It localises to the cytoplasm. It carries out the reaction guanosine(1835) in 23S rRNA + S-adenosyl-L-methionine = N(2)-methylguanosine(1835) in 23S rRNA + S-adenosyl-L-homocysteine + H(+). In terms of biological role, specifically methylates the guanine in position 1835 (m2G1835) of 23S rRNA. The chain is Ribosomal RNA large subunit methyltransferase G from Shigella boydii serotype 18 (strain CDC 3083-94 / BS512).